We begin with the raw amino-acid sequence, 365 residues long: Potassium channel subfamily K member 9 (365 aa).

At 1–8 (MKKQNVRT) the chain is on the cytoplasmic side. The chain crosses the membrane as a helical span at residues 9–29 (LSLIACTFTYLLVGAAVFDAL). The Extracellular portion of the chain corresponds to 30 to 88 (ESDHEMREEEKLKAEEIRIRGKYNISTEDYRQLELVILQSEPHRAGVQWKFAGSFYFAI). N53 carries an N-linked (GlcNAc...) asparagine glycan. Positions 89-101 (TVITTIGYGHAAP) form an intramembrane region, pore-forming. Residues T93, I94, G95, and Y96 each coordinate K(+). Residues 93 to 98 (TIGYGH) form a selectivity filter 1 region. The Extracellular segment spans residues 102–107 (GTDAGK). Residues 108-128 (AFCMFYAVLGIPLTLVMFQSL) form a helical membrane-spanning segment. At 129–158 (GERMNTFVRYLLKRIKKCCGMRNTEVSMEN) the chain is on the cytoplasmic side. Residues 159-179 (MVTVGFFSCMGTLCIGAAAFS) traverse the membrane as a helical segment. Topologically, residues 180–194 (QCEEWSFFHAYYYCF) are extracellular. Residues 195–207 (ITLTTIGFGDYVA) constitute an intramembrane region (pore-forming). 4 residues coordinate K(+): T199, I200, G201, and F202. Residues 199–204 (TIGFGD) are selectivity filter 2. Topologically, residues 208–218 (LQSKGALQRKP) are extracellular. Residues 219 to 239 (FYVAFSFMYILVGLTVIGAFL) traverse the membrane as a helical segment. Topologically, residues 240–365 (NLVVLRFLTM…HRLMLRRKSV (126 aa)) are cytoplasmic. The segment at 243–248 (VLRFLT) is X-gate.

Belongs to the two pore domain potassium channel (TC 1.A.1.8) family. As to quaternary structure, homodimer. Heterodimer with KCNK1. Heterodimer with KCNK3. Highly expressed in the brain.

It localises to the cell membrane. The protein resides in the mitochondrion inner membrane. The protein localises to the cell projection. It is found in the dendrite. The enzyme catalyses K(+)(in) = K(+)(out). The catalysed reaction is Na(+)(in) = Na(+)(out). Inhibited by extracellular acidification. In terms of biological role, k(+) channel that conducts voltage-dependent outward rectifying currents upon membrane depolarization. Voltage sensing is coupled to K(+) electrochemical gradient in an 'ion flux gating' mode where outward but not inward ion flow opens the gate. Changes ion selectivity and becomes permeable to Na(+) ions in response to extracellular acidification. Protonation of the pH sensor His-98 stabilizes C-type inactivation conformation likely converting the channel from outward K(+)-conducting, to inward Na(+)-conducting to nonconductive state. Homo- and heterodimerizes to form functional channels with distinct regulatory and gating properties. Allows K(+) currents with fast-gating kinetics important for the repolarization and hyperpolarization phases of action potentials. In granule neurons, hyperpolarizes the resting membrane potential to limit intrinsic neuronal excitability, but once the action potential threshold is reached, supports high-frequency action potential firing and increased neuronal excitability. Homomeric and/or heteromeric KCNK3:KCNK9 channels operate in cerebellar granule cells, whereas heteromeric KCNK1:KCNK9 enables currents in hippocampal dentate gyrus granule neurons. Dispensable for central chemosensory respiration i.e. breathing controlled by brainstem CO2/pH, it rather conducts pH-sensitive currents and controls the firing rate of serotonergic raphe neurons involved in potentiation of the respiratory chemoreflex. In retinal ganglion cells, mediates outward rectifying currents that regulate action potentials in response to acidification of the synaptic cleft. Involved in transmission of image-forming and nonimage-forming visual information in the retina. In adrenal gland, contributes to the maintenance of a hyperpolarized resting membrane potential of aldosterone-producing cells at zona glomerulosa and limits aldosterone release as part of a regulatory mechanism that controls arterial blood pressure and electrolyte homeostasis. The polypeptide is Potassium channel subfamily K member 9 (KCNK9) (Cavia porcellus (Guinea pig)).